The following is a 213-amino-acid chain: Small ribosomal subunit protein uS3 (213 aa).

The 69-residue stretch at 38 to 106 (IRSYIKKLLY…EFSLEVTEVR (69 aa)) folds into the KH type-2 domain.

The protein belongs to the universal ribosomal protein uS3 family. Part of the 30S ribosomal subunit. Forms a tight complex with proteins S10 and S14.

Its function is as follows. Binds the lower part of the 30S subunit head. Binds mRNA in the 70S ribosome, positioning it for translation. This is Small ribosomal subunit protein uS3 from Lawsonia intracellularis (strain PHE/MN1-00).